The chain runs to 390 residues: Lipid-A-disaccharide synthase (390 aa).

This sequence belongs to the LpxB family.

The catalysed reaction is a lipid X + a UDP-2-N,3-O-bis[(3R)-3-hydroxyacyl]-alpha-D-glucosamine = a lipid A disaccharide + UDP + H(+). The protein operates within bacterial outer membrane biogenesis; LPS lipid A biosynthesis. Functionally, condensation of UDP-2,3-diacylglucosamine and 2,3-diacylglucosamine-1-phosphate to form lipid A disaccharide, a precursor of lipid A, a phosphorylated glycolipid that anchors the lipopolysaccharide to the outer membrane of the cell. The chain is Lipid-A-disaccharide synthase from Haemophilus influenzae (strain PittGG).